A 204-amino-acid chain; its full sequence is Thymidylate kinase (204 aa).

Residue 12-19 (GVDGAGKS) participates in ATP binding.

It belongs to the thymidylate kinase family.

The enzyme catalyses dTMP + ATP = dTDP + ADP. Functionally, phosphorylation of dTMP to form dTDP in both de novo and salvage pathways of dTTP synthesis. The chain is Thymidylate kinase from Thiobacillus denitrificans (strain ATCC 25259 / T1).